The sequence spans 717 residues: HHIP-like protein 2 (717 aa).

Positions 1 to 40 are cleaved as a signal peptide; the sequence is MLGKHTSPHTVPGHRAPWLSPGIFCLGLPFLLGWVGLLQG. Disulfide bonds link cysteine 203–cysteine 545, cysteine 207–cysteine 551, cysteine 423–cysteine 441, and cysteine 508–cysteine 607. Residues 642-717 form a disordered region; sequence ARKASNATFT…MRQAAGRSHP (76 aa). Over residues 646–662 the composition is skewed to polar residues; that stretch reads SNATFTSSSDRVASQKG. N-linked (GlcNAc...) asparagine glycosylation is present at asparagine 647. Basic residues predominate over residues 672-687; the sequence is SSKKTFRRPGTKKKSR.

It belongs to the HHIP family.

It localises to the secreted. The polypeptide is HHIP-like protein 2 (Hhipl2) (Mus musculus (Mouse)).